The sequence spans 149 residues: Transcription antitermination protein NusB (149 aa).

Belongs to the NusB family.

In terms of biological role, involved in transcription antitermination. Required for transcription of ribosomal RNA (rRNA) genes. Binds specifically to the boxA antiterminator sequence of the ribosomal RNA (rrn) operons. This is Transcription antitermination protein NusB from Acinetobacter baumannii (strain SDF).